The chain runs to 282 residues: NAD(P)H-hydrate epimerase (282 aa).

The transit peptide at 1-53 directs the protein to the mitochondrion; it reads MSGLRTLLGLGLLVAGSRLPRIASRQSVCRAGPIWWGTQHRSSETMASAAVKY. Positions 59–269 constitute a YjeF N-terminal domain; sequence AQAVDEELFN…ALEKKYQLNL (211 aa). Position 113 to 117 (113 to 117) interacts with (6S)-NADPHX; that stretch reads NNGGD. N114 lines the K(+) pocket. An N6-succinyllysine modification is found at K138. D179 provides a ligand contact to K(+). Residues 183–189 and D212 each bind (6S)-NADPHX; that span reads GFSFKGD. S215 is a K(+) binding site.

It belongs to the NnrE/AIBP family. As to quaternary structure, homodimer. Interacts with APOA1 and APOA2. K(+) serves as cofactor. Post-translationally, undergoes physiological phosphorylation during sperm capacitation, downstream to PKA activation.

Its subcellular location is the mitochondrion. The protein localises to the secreted. The catalysed reaction is (6R)-NADHX = (6S)-NADHX. It carries out the reaction (6R)-NADPHX = (6S)-NADPHX. Functionally, catalyzes the epimerization of the S- and R-forms of NAD(P)HX, a damaged form of NAD(P)H that is a result of enzymatic or heat-dependent hydration. This is a prerequisite for the S-specific NAD(P)H-hydrate dehydratase to allow the repair of both epimers of NAD(P)HX. Accelerates cholesterol efflux from endothelial cells to high-density lipoprotein (HDL) and thereby regulates angiogenesis. The protein is NAD(P)H-hydrate epimerase of Rattus norvegicus (Rat).